Reading from the N-terminus, the 535-residue chain is Probable bifunctional tRNA threonylcarbamoyladenosine biosynthesis protein (535 aa).

Residues 1–323 (MICLGLEGTA…YRTDMVEVNW (323 aa)) are kae1. 3 residues coordinate Fe cation: His-106, His-110, and Tyr-127. L-threonylcarbamoyladenylate is bound by residues 127 to 131 (YVSGG), Asp-159, Gly-172, Glu-176, and Asn-256. Residue Asp-284 coordinates Fe cation. Residues 333-535 (KIPEHLIGKG…DVERRARYVE (203 aa)) form the Protein kinase domain. ATP-binding positions include 339 to 347 (IGKGAEADI) and Lys-360. The Proton acceptor; for kinase activity role is filled by Asp-451.

In the N-terminal section; belongs to the KAE1 / TsaD family. The protein in the C-terminal section; belongs to the protein kinase superfamily. Tyr protein kinase family. BUD32 subfamily. In terms of assembly, component of the KEOPS complex that consists of Kae1, Bud32, Cgi121 and Pcc1; the whole complex dimerizes. Fe(2+) serves as cofactor.

Its subcellular location is the cytoplasm. It carries out the reaction L-seryl-[protein] + ATP = O-phospho-L-seryl-[protein] + ADP + H(+). The catalysed reaction is L-threonyl-[protein] + ATP = O-phospho-L-threonyl-[protein] + ADP + H(+). It catalyses the reaction L-threonylcarbamoyladenylate + adenosine(37) in tRNA = N(6)-L-threonylcarbamoyladenosine(37) in tRNA + AMP + H(+). Its activity is regulated as follows. Activity provided by the Kae1 region seems to be regulated via phosphorylation by the protein kinase Bud32, which is itself activated by Cgi121. Its function is as follows. Required for the formation of a threonylcarbamoyl group on adenosine at position 37 (t(6)A37) in tRNAs that read codons beginning with adenine. Is a component of the KEOPS complex that is probably involved in the transfer of the threonylcarbamoyl moiety of threonylcarbamoyl-AMP (TC-AMP) to the N6 group of A37. The Kae1 domain likely plays a direct catalytic role in this reaction. The Bud32 domain probably displays kinase activity that regulates Kae1 function. In vitro, exhibits low ATPase activity, but does not bind DNA and does not have endonuclease activity. This Methanocaldococcus jannaschii (strain ATCC 43067 / DSM 2661 / JAL-1 / JCM 10045 / NBRC 100440) (Methanococcus jannaschii) protein is Probable bifunctional tRNA threonylcarbamoyladenosine biosynthesis protein.